The chain runs to 409 residues: FBD-associated F-box protein At4g10400 (409 aa).

The F-box domain occupies 1–47; it reads MDRISGLPDEVLVKILSFVPTKVAVSTSILSKRWEFLWMWLTKLKFG. The region spanning 330–379 is the FBD domain; sequence SWNQPSIVPECMLSSLQKFTWFKYLGRPQDRDIAVYILKNACRLRTATIK.

This Arabidopsis thaliana (Mouse-ear cress) protein is FBD-associated F-box protein At4g10400.